Here is a 372-residue protein sequence, read N- to C-terminus: Testis-specific serine/threonine-protein kinase 5 (372 aa).

The 276-residue stretch at 27-302 folds into the Protein kinase domain; sequence LLSSKKIGSG…LQQVAAHCWM (276 aa). ATP-binding positions include 33–41 and Lys-72; that span reads IGSGAFSKV. The Proton acceptor role is filled by Asp-173. The disordered stretch occupies residues 314-372; the sequence is GAPREQDHSWSTVAPDNTEPDRDTRHARSKGSSSSSGRTSPRRPSLAQLCNTWKPAPEQ. Over residues 343–358 the composition is skewed to low complexity; it reads KGSSSSSGRTSPRRPS.

Belongs to the protein kinase superfamily. CAMK Ser/Thr protein kinase family. Requires Mg(2+) as cofactor. Post-translationally, autophosphorylated.

The enzyme catalyses L-seryl-[protein] + ATP = O-phospho-L-seryl-[protein] + ADP + H(+). It carries out the reaction L-threonyl-[protein] + ATP = O-phospho-L-threonyl-[protein] + ADP + H(+). With respect to regulation, activated by phosphorylation on Thr-207, potentially by autophosphorylation. In terms of biological role, may be involved in a signaling pathway during male germ cell development or mature sperm function. This chain is Testis-specific serine/threonine-protein kinase 5, found in Mus musculus (Mouse).